The sequence spans 886 residues: Kinesin-like protein KIF18A (886 aa).

Positions 11–355 (RMKVVVRVRP…LKYANRAKEI (345 aa)) constitute a Kinesin motor domain. A Glycyl lysine isopeptide (Lys-Gly) (interchain with G-Cter in SUMO2) cross-link involves residue Lys-24. 113–120 (GATGSGKT) provides a ligand contact to ATP. A coiled-coil region spans residues 370 to 404 (ISQYVKICNMQKAEILMLKEKLKAYEEQKALSDRN). Residue Ser-674 is modified to Phosphoserine. Lys-683 participates in a covalent cross-link: Glycyl lysine isopeptide (Lys-Gly) (interchain with G-Cter in SUMO2). Ser-695 carries the phosphoserine modification. Positions 774–804 (EQEPLASSKSSVHRIESSSFSTKDSMPESAG) are disordered. Lys-782 participates in a covalent cross-link: Glycyl lysine isopeptide (Lys-Gly) (interchain with G-Cter in SUMO2). At Ser-826 the chain carries Phosphoserine. Lys-862 is covalently cross-linked (Glycyl lysine isopeptide (Lys-Gly) (interchain with G-Cter in SUMO2)). The tract at residues 862–886 (KRNTNKTNSNMLRKFRRNTSKENVQ) is disordered.

This sequence belongs to the TRAFAC class myosin-kinesin ATPase superfamily. Kinesin family. Interacts with CENPE and ESR1. Glycosylated. In terms of processing, ubiquitinated.

Its subcellular location is the cell projection. The protein resides in the ruffle. It localises to the cytoplasm. The protein localises to the nucleus. It is found in the cytoskeleton. Its subcellular location is the microtubule organizing center. The protein resides in the centrosome. Microtubule-depolymerizing kinesin which plays a role in chromosome congression by reducing the amplitude of preanaphase oscillations and slowing poleward movement during anaphase, thus suppressing chromosome movements. May stabilize the CENPE-BUB1B complex at the kinetochores during early mitosis and maintains CENPE levels at kinetochores during chromosome congression. The protein is Kinesin-like protein KIF18A (Kif18a) of Mus musculus (Mouse).